The sequence spans 74 residues: UPF0435 protein Bcer98_0391 (74 aa).

The protein belongs to the UPF0435 family.

The protein is UPF0435 protein Bcer98_0391 of Bacillus cytotoxicus (strain DSM 22905 / CIP 110041 / 391-98 / NVH 391-98).